The sequence spans 590 residues: V-type ATP synthase alpha chain (590 aa).

Glycine 231–threonine 238 provides a ligand contact to ATP.

The protein belongs to the ATPase alpha/beta chains family.

The catalysed reaction is ATP + H2O + 4 H(+)(in) = ADP + phosphate + 5 H(+)(out). Its function is as follows. Produces ATP from ADP in the presence of a proton gradient across the membrane. The V-type alpha chain is a catalytic subunit. In Clostridium botulinum (strain ATCC 19397 / Type A), this protein is V-type ATP synthase alpha chain.